A 293-amino-acid polypeptide reads, in one-letter code: 4-hydroxy-tetrahydrodipicolinate synthase (293 aa).

Thr-45 lines the pyruvate pocket. The Proton donor/acceptor role is filled by Tyr-133. Residue Lys-161 is the Schiff-base intermediate with substrate of the active site. Position 203 (Ile-203) interacts with pyruvate.

This sequence belongs to the DapA family. In terms of assembly, homotetramer; dimer of dimers.

The protein localises to the cytoplasm. The enzyme catalyses L-aspartate 4-semialdehyde + pyruvate = (2S,4S)-4-hydroxy-2,3,4,5-tetrahydrodipicolinate + H2O + H(+). It functions in the pathway amino-acid biosynthesis; L-lysine biosynthesis via DAP pathway; (S)-tetrahydrodipicolinate from L-aspartate: step 3/4. Catalyzes the condensation of (S)-aspartate-beta-semialdehyde [(S)-ASA] and pyruvate to 4-hydroxy-tetrahydrodipicolinate (HTPA). This Aliivibrio fischeri (strain MJ11) (Vibrio fischeri) protein is 4-hydroxy-tetrahydrodipicolinate synthase.